The primary structure comprises 59 residues: Large ribosomal subunit protein uL30 (59 aa).

The protein belongs to the universal ribosomal protein uL30 family. As to quaternary structure, part of the 50S ribosomal subunit.

The chain is Large ribosomal subunit protein uL30 from Aliivibrio fischeri (strain MJ11) (Vibrio fischeri).